The following is a 154-amino-acid chain: Cathelicidin-2 (154 aa).

The signal sequence occupies residues 1–17; it reads MLSCWVLLLALLGGVCA. The propeptide occupies 18-122; sequence LPAPLSYPQA…RCRDASSDPV (105 aa). Disulfide bonds link C75-C86 and C97-C114.

Belongs to the cathelicidin family. Detected in trachea, lung, proventriculus, duodenum, jejunum, ileum, caeca, colon, caecal tonsil, bursa of Fabricius, kidney, ovary, testis, thymus, liver, spleen, bone marrow, skin, uropygial gland, muscle and brain.

The protein localises to the secreted. Its function is as follows. Binds bacterial lipopolysaccharide (LPS). Has potent antimicrobial activity against Gram-positive and Gram-negative bacteria (in vitro). Has hemolytic activity (in vitro). May play a role in the innate immune response. The sequence is that of Cathelicidin-2 (CATHL2) from Gallus gallus (Chicken).